The following is a 612-amino-acid chain: Anaerobic magnesium-protoporphyrin IX monomethyl ester cyclase (612 aa).

The B12-binding domain occupies 9-143 (NYHSGGAEIA…KAYEADNFAE (135 aa)). Positions 190 to 417 (PLGVRVAIPN…MKPKALTRGE (228 aa)) constitute a Radical SAM core domain. Positions 204, 208, and 211 each coordinate [4Fe-4S] cluster.

The protein belongs to the BchE family. It depends on [4Fe-4S] cluster as a cofactor. The cofactor is adenosylcob(III)alamin.

It carries out the reaction Mg-protoporphyrin IX 13-monomethyl ester + 3 S-adenosyl-L-methionine + H2O = 3,8-divinyl protochlorophyllide a + 3 5'-deoxyadenosine + 3 L-methionine + 4 H(+). It functions in the pathway porphyrin-containing compound metabolism; bacteriochlorophyll biosynthesis (light-independent). Functionally, involved in the tetrapyrrole biosynthetic pathways leading to chlorophyll and bacteriochlorophyll (BChl). Catalyzes the anaerobic formation of the isocyclic ring (E-ring) in Mg-protoporphyrin monomethyl ester (MPE) to yield protochlorophyllide a (PChlide a) via a six-electron oxidation and the formation of an oxo group at position C13 using oxygen from a water molecule. The sequence is that of Anaerobic magnesium-protoporphyrin IX monomethyl ester cyclase from Cereibacter sphaeroides (strain ATCC 17023 / DSM 158 / JCM 6121 / CCUG 31486 / LMG 2827 / NBRC 12203 / NCIMB 8253 / ATH 2.4.1.) (Rhodobacter sphaeroides).